A 245-amino-acid polypeptide reads, in one-letter code: Thiopurine S-methyltransferase (245 aa).

S-adenosyl-L-methionine is bound at residue 29-40 (WQDKWVSHKIGF). A substrate-binding site is contributed by phenylalanine 40. At lysine 58 the chain carries N6-acetyllysine. S-adenosyl-L-methionine contacts are provided by residues leucine 69, glutamate 90, 134–135 (SI), and arginine 152.

Belongs to the class I-like SAM-binding methyltransferase superfamily. TPMT family. In terms of assembly, monomer.

The protein resides in the cytoplasm. The enzyme catalyses S-adenosyl-L-methionine + a thiopurine = S-adenosyl-L-homocysteine + a thiopurine S-methylether.. This chain is Thiopurine S-methyltransferase (TPMT), found in Oryctolagus cuniculus (Rabbit).